A 1220-amino-acid chain; its full sequence is ATP-dependent helicase/deoxyribonuclease subunit B (1220 aa).

Residues 1-281 (MSMRFIVGRA…VFLTETHRFE (281 aa)) form the UvrD-like helicase ATP-binding domain. ATP is bound at residue 8–15 (GRAGTGKS). The UvrD-like helicase C-terminal domain maps to 283–590 (AGLKHLERFY…LVGSLDRSRN (308 aa)). Residue C788 participates in [4Fe-4S] cluster binding. The segment at 989–1008 (LAEGSKGSEGSEGSEDSEDS) is disordered. The [4Fe-4S] cluster site is built by C1128, C1131, and C1137. Over residues 1162–1171 (RVQSQDSEQY) the composition is skewed to polar residues. The tract at residues 1162–1220 (RVQSQDSEQYPEQHPPTSVPGETSRRALQKDGGNSPRGQELIWLGEDEAGAGKEDDGHE) is disordered. The segment covering 1211-1220 (GAGKEDDGHE) has biased composition (basic and acidic residues).

The protein belongs to the helicase family. AddB/RexB type 1 subfamily. As to quaternary structure, heterodimer of AddA and AddB. Mg(2+) is required as a cofactor. It depends on [4Fe-4S] cluster as a cofactor.

In terms of biological role, the heterodimer acts as both an ATP-dependent DNA helicase and an ATP-dependent, dual-direction single-stranded exonuclease. Recognizes the chi site generating a DNA molecule suitable for the initiation of homologous recombination. The AddB subunit has 5' -&gt; 3' nuclease activity but not helicase activity. This Desulfitobacterium hafniense (strain Y51) protein is ATP-dependent helicase/deoxyribonuclease subunit B.